The following is a 640-amino-acid chain: Threonine--tRNA ligase (640 aa).

A TGS domain is found at 1–60 (MKITFPDGAVKEFEPGVSTADIAASISPGLKKKALAGKLNGELLDLVTPIHEDGAIEIVT). Residues 241–538 (DHRKLGKELE…LIEEYKGAFP (298 aa)) form a catalytic region. Zn(2+) contacts are provided by Cys-334, His-385, and His-515.

This sequence belongs to the class-II aminoacyl-tRNA synthetase family. Homodimer. Zn(2+) serves as cofactor.

It is found in the cytoplasm. It catalyses the reaction tRNA(Thr) + L-threonine + ATP = L-threonyl-tRNA(Thr) + AMP + diphosphate + H(+). Catalyzes the attachment of threonine to tRNA(Thr) in a two-step reaction: L-threonine is first activated by ATP to form Thr-AMP and then transferred to the acceptor end of tRNA(Thr). Also edits incorrectly charged L-seryl-tRNA(Thr). This is Threonine--tRNA ligase from Listeria welshimeri serovar 6b (strain ATCC 35897 / DSM 20650 / CCUG 15529 / CIP 8149 / NCTC 11857 / SLCC 5334 / V8).